The following is a 243-amino-acid chain: UPF0246 protein SpyM3_1790 (243 aa).

Belongs to the UPF0246 family.

The chain is UPF0246 protein SpyM3_1790 from Streptococcus pyogenes serotype M3 (strain ATCC BAA-595 / MGAS315).